Consider the following 355-residue polypeptide: Protein pelota homolog (355 aa).

This sequence belongs to the eukaryotic release factor 1 family. Pelota subfamily. As to quaternary structure, monomer. A divalent metal cation is required as a cofactor.

It is found in the cytoplasm. May function in recognizing stalled ribosomes, interact with stem-loop structures in stalled mRNA molecules, and effect endonucleolytic cleavage of the mRNA. May play a role in the release non-functional ribosomes and degradation of damaged mRNAs. Has endoribonuclease activity. This is Protein pelota homolog from Haloarcula marismortui (strain ATCC 43049 / DSM 3752 / JCM 8966 / VKM B-1809) (Halobacterium marismortui).